A 103-amino-acid polypeptide reads, in one-letter code: Large ribosomal subunit protein bL21 (103 aa).

The protein belongs to the bacterial ribosomal protein bL21 family. As to quaternary structure, part of the 50S ribosomal subunit. Contacts protein L20.

Functionally, this protein binds to 23S rRNA in the presence of protein L20. This chain is Large ribosomal subunit protein bL21, found in Wolinella succinogenes (strain ATCC 29543 / DSM 1740 / CCUG 13145 / JCM 31913 / LMG 7466 / NCTC 11488 / FDC 602W) (Vibrio succinogenes).